The primary structure comprises 293 residues: Large ribosomal subunit protein uL4c (293 aa).

The N-terminal 50 residues, 1–50 (MATSTSSSLSLSFFSSSLFSSKSRNFSSKPILKLPSSSHSQTSLSLSIKS), are a transit peptide targeting the chloroplast. 2 disordered regions span residues 107 to 138 (EVRG…PGGG) and 259 to 293 (YGVD…EPAE). The segment covering 116 to 126 (YPQKKTGRARR) has biased composition (basic residues). The segment covering 263 to 293 (TLEDEDEEEEEEEEGEEVDDGVEDGTPEPAE) has biased composition (acidic residues).

It belongs to the universal ribosomal protein uL4 family. Component of the chloroplast large ribosomal subunit (LSU). Mature 70S chloroplast ribosomes of higher plants consist of a small (30S) and a large (50S) subunit. The 30S small subunit contains 1 molecule of ribosomal RNA (16S rRNA) and 24 different proteins. The 50S large subunit contains 3 rRNA molecules (23S, 5S and 4.5S rRNA) and 33 different proteins. As to expression, highly expressed in cotyledon and weakly in roots.

The protein resides in the plastid. The protein localises to the chloroplast. Component of the chloroplast ribosome (chloro-ribosome), a dedicated translation machinery responsible for the synthesis of chloroplast genome-encoded proteins, including proteins of the transcription and translation machinery and components of the photosynthetic apparatus. The protein is Large ribosomal subunit protein uL4c (RPL4) of Spinacia oleracea (Spinach).